The sequence spans 98 residues: Large ribosomal subunit protein uL23 (98 aa).

The protein belongs to the universal ribosomal protein uL23 family. In terms of assembly, part of the 50S ribosomal subunit. Contacts protein L29, and trigger factor when it is bound to the ribosome.

Functionally, one of the early assembly proteins it binds 23S rRNA. One of the proteins that surrounds the polypeptide exit tunnel on the outside of the ribosome. Forms the main docking site for trigger factor binding to the ribosome. This is Large ribosomal subunit protein uL23 from Borreliella afzelii (strain PKo) (Borrelia afzelii).